We begin with the raw amino-acid sequence, 2290 residues long: Armadillo repeat-containing X-linked protein 4 (2290 aa).

Residues 7–24 form a helical membrane-spanning segment; that stretch reads VGWVTAGLVIWAGTCYYI. Disordered regions lie at residues 517–549, 564–583, 967–988, 1014–1087, 1302–1430, 1521–1715, 1911–1931, and 1954–1973; these read QGEA…TCTQ, SRVD…TKAD, KVRG…VGSA, AVPK…ACRK, GSWA…ANSG, GSWG…RSED, SNTF…AGDN, and NENT…KSSE. Basic residues predominate over residues 526–536; the sequence is GKARGKAKAKC. A compositionally biased stretch (polar residues) spans 1073–1087; it reads TSESEGGSGTQACRK. 2 stretches are compositionally biased toward gly residues: residues 1328–1341 and 1403–1414; these read SWAG…GGSM and AGAGGQAGGGSK. Polar residues predominate over residues 1419 to 1430; it reads DQSSGRSWANSG. Residues 1521 to 1535 are compositionally biased toward gly residues; that stretch reads GSWGGASGQDVGGSR. The segment covering 1537-1558 has biased composition (polar residues); the sequence is GPTNQSSAGSWDSPGSQVSGSC. 2 stretches are compositionally biased toward gly residues: residues 1581 to 1598 and 1609 to 1623; these read IGGG…GGSR and GSWG…GGAR. Residues 1628–1645 are compositionally biased toward polar residues; that stretch reads DQSSGGSWAGTGNQSSGR. The span at 1674 to 1687 shows a compositional bias: low complexity; that stretch reads GAGSQASGESWAGS. ARM repeat units follow at residues 2031–2071, 2073–2112, 2153–2192, and 2194–2234; these read RCKH…NSAD, SYSH…NISV, ITSE…NFSK, and PSMT…NINY.

The protein belongs to the eutherian X-chromosome-specific Armcx family.

The protein localises to the membrane. This Homo sapiens (Human) protein is Armadillo repeat-containing X-linked protein 4 (ARMCX4).